The chain runs to 316 residues: Ornithine carbamoyltransferase (316 aa).

Carbamoyl phosphate contacts are provided by residues 57-60 (STRT), Gln-84, Arg-108, and 135-138 (HPCQ). L-ornithine is bound by residues Asn-166, Asp-230, and 234-235 (SM). Carbamoyl phosphate is bound by residues 269-270 (CL) and Arg-297.

It belongs to the aspartate/ornithine carbamoyltransferase superfamily. OTCase family.

It is found in the cytoplasm. It catalyses the reaction carbamoyl phosphate + L-ornithine = L-citrulline + phosphate + H(+). It participates in amino-acid biosynthesis; L-arginine biosynthesis; L-arginine from L-ornithine and carbamoyl phosphate: step 1/3. Its function is as follows. Reversibly catalyzes the transfer of the carbamoyl group from carbamoyl phosphate (CP) to the N(epsilon) atom of ornithine (ORN) to produce L-citrulline. The polypeptide is Ornithine carbamoyltransferase (Bacillus thuringiensis subsp. konkukian (strain 97-27)).